The primary structure comprises 660 residues: MTDRIVPATLVFREDGTVVSPLYGDIYHSAAGALAQADHVFIRGNGLPERWRHERAFTIIETGFGTGCNFLATWAAWRADPSHCERLHFVSVEKHPFAREDLRRAAAHIVAYTTITTITPIAPLVDELANAWPALTPGVHRLEFDDGRVTLTLVFGDALDVLPNLALRAHAFYLDGFAPSKNADLWSPAIFKSLAKLADERATFATYTSSGAVKRALDEAGFAYRKVDGFAGKRAMLVGEFAPRWRVRRHEPPRAFSTDRRDAIVIGAGLAGCAVVERLAARGWHVTLIERRERIASEASGNPAGVFHPMIARDDNLAARLSRAGFLHALHRWRALERAGHAFSRSTHGLVQLATSDDEFERMRESIDALGVPAELASALSRDDARALLRTDVAHGGWLFAQGGSISPAALAAAQCAAAGDRLSRIVGVEIARLERGGDGRWRALDASGATIAQASVVVVANAADAARIAGLRHAPTQRVRGQLTLLPPGSAPAVPLPVIGDGYVVPLANGVTLTGATYEPDDTDATPREAGHRENLERLERLLPAFSANALDAGALAGRVGFRCVASDRLPLVGELGDEAAAAREAAALTGARLRDVPRATGLYGAFGYGSRGLVWATLGAELIAAQIDGEPWPLERELAEAIDPARFLVRALRHGRVA.

The interval 1-242 (MTDRIVPATL…KRAMLVGEFA (242 aa)) is tRNA (mnm(5)s(2)U34)-methyltransferase. An FAD-dependent cmnm(5)s(2)U34 oxidoreductase region spans residues 266-660 (IGAGLAGCAV…VRALRHGRVA (395 aa)).

This sequence in the N-terminal section; belongs to the methyltransferase superfamily. tRNA (mnm(5)s(2)U34)-methyltransferase family. In the C-terminal section; belongs to the DAO family. FAD serves as cofactor.

The protein resides in the cytoplasm. The enzyme catalyses 5-aminomethyl-2-thiouridine(34) in tRNA + S-adenosyl-L-methionine = 5-methylaminomethyl-2-thiouridine(34) in tRNA + S-adenosyl-L-homocysteine + H(+). In terms of biological role, catalyzes the last two steps in the biosynthesis of 5-methylaminomethyl-2-thiouridine (mnm(5)s(2)U) at the wobble position (U34) in tRNA. Catalyzes the FAD-dependent demodification of cmnm(5)s(2)U34 to nm(5)s(2)U34, followed by the transfer of a methyl group from S-adenosyl-L-methionine to nm(5)s(2)U34, to form mnm(5)s(2)U34. This Burkholderia pseudomallei (strain 1710b) protein is tRNA 5-methylaminomethyl-2-thiouridine biosynthesis bifunctional protein MnmC.